The following is a 530-amino-acid chain: Arginine--tRNA ligase (530 aa).

The 'HIGH' region motif lies at 113–123; sequence ANPTGPLHIGH.

This sequence belongs to the class-I aminoacyl-tRNA synthetase family. Monomer.

The protein localises to the cytoplasm. The catalysed reaction is tRNA(Arg) + L-arginine + ATP = L-arginyl-tRNA(Arg) + AMP + diphosphate. The polypeptide is Arginine--tRNA ligase (Campylobacter jejuni (strain RM1221)).